The primary structure comprises 214 residues: Cell division protein B1 (214 aa).

In terms of biological role, part of a cell division machinery. This is Cell division protein B1 from Sulfolobus acidocaldarius (strain ATCC 33909 / DSM 639 / JCM 8929 / NBRC 15157 / NCIMB 11770).